A 542-amino-acid polypeptide reads, in one-letter code: GMP synthase [glutamine-hydrolyzing] (542 aa).

Residues Met-28–Thr-218 form the Glutamine amidotransferase type-1 domain. Residue Cys-105 is the Nucleophile of the active site. Catalysis depends on residues His-192 and Glu-194. Residues Trp-219–Arg-417 enclose the GMPS ATP-PPase domain. Ser-246–Ser-252 contacts ATP.

In terms of assembly, homodimer.

It carries out the reaction XMP + L-glutamine + ATP + H2O = GMP + L-glutamate + AMP + diphosphate + 2 H(+). It participates in purine metabolism; GMP biosynthesis; GMP from XMP (L-Gln route): step 1/1. Its function is as follows. Catalyzes the synthesis of GMP from XMP. The polypeptide is GMP synthase [glutamine-hydrolyzing] (Crocosphaera subtropica (strain ATCC 51142 / BH68) (Cyanothece sp. (strain ATCC 51142))).